The sequence spans 119 residues: Phosphoribosyl-AMP cyclohydrolase (119 aa).

Asp77 serves as a coordination point for Mg(2+). Zn(2+) is bound at residue Cys78. 2 residues coordinate Mg(2+): Asp79 and Asp81. Zn(2+) is bound by residues Cys94 and Cys101.

This sequence belongs to the PRA-CH family. Homodimer. It depends on Mg(2+) as a cofactor. Zn(2+) is required as a cofactor.

It localises to the cytoplasm. It carries out the reaction 1-(5-phospho-beta-D-ribosyl)-5'-AMP + H2O = 1-(5-phospho-beta-D-ribosyl)-5-[(5-phospho-beta-D-ribosylamino)methylideneamino]imidazole-4-carboxamide. The protein operates within amino-acid biosynthesis; L-histidine biosynthesis; L-histidine from 5-phospho-alpha-D-ribose 1-diphosphate: step 3/9. Functionally, catalyzes the hydrolysis of the adenine ring of phosphoribosyl-AMP. In Cereibacter sphaeroides (strain ATCC 17023 / DSM 158 / JCM 6121 / CCUG 31486 / LMG 2827 / NBRC 12203 / NCIMB 8253 / ATH 2.4.1.) (Rhodobacter sphaeroides), this protein is Phosphoribosyl-AMP cyclohydrolase.